Consider the following 302-residue polypeptide: tRNA dimethylallyltransferase (302 aa).

Position 8–15 (8–15) interacts with ATP; that stretch reads GSSGSGKS. 10 to 15 provides a ligand contact to substrate; it reads SGSGKS. The interaction with substrate tRNA stretch occupies residues 33–36; sequence DSLS.

This sequence belongs to the IPP transferase family. Monomer. Requires Mg(2+) as cofactor.

It catalyses the reaction adenosine(37) in tRNA + dimethylallyl diphosphate = N(6)-dimethylallyladenosine(37) in tRNA + diphosphate. Its function is as follows. Catalyzes the transfer of a dimethylallyl group onto the adenine at position 37 in tRNAs that read codons beginning with uridine, leading to the formation of N6-(dimethylallyl)adenosine (i(6)A). The sequence is that of tRNA dimethylallyltransferase from Helicobacter hepaticus (strain ATCC 51449 / 3B1).